The following is an 84-amino-acid chain: Large ribosomal subunit protein bL31B (84 aa).

It belongs to the bacterial ribosomal protein bL31 family. Type B subfamily. In terms of assembly, part of the 50S ribosomal subunit.

This Staphylococcus aureus (strain Mu3 / ATCC 700698) protein is Large ribosomal subunit protein bL31B.